We begin with the raw amino-acid sequence, 334 residues long: Cytoplasmic envelopment protein 2 (334 aa).

This sequence belongs to the herpesviridae cytoplasmic envelopment protein 2 family. Interacts with cytoplasmic envelopment protein 3 and with the capsid.

Its subcellular location is the virion tegument. It is found in the host cytoplasm. The protein localises to the host nucleus. In terms of biological role, plays a critical role in cytoplasmic virus egress. Participates in the final step of tegumentation and envelope acquisition within the host cytoplasm by directly interacting with the capsid. Upon virion binding to target cell, a signaling cascade is triggered to disrupt the interaction with the capsid, thereby preparing capsid uncoating. This chain is Cytoplasmic envelopment protein 2 (ORF33), found in Homo sapiens (Human).